A 200-amino-acid chain; its full sequence is MGLHSEPLDQEDQDTIILDARAGDLDSLKDIFTTLVSPELLSTCKESESDSTALHMAAANGHIETVRYILETVSRANSAEDLKAFVNEVNKTGNTALHWASLNGKLDVVKLLCDEYEADPFIRNKFGHDAIFEAENSGKEEVETYFLKKYDVEPEDDEEDTQTEGKNSVQITKGTEIEQVTKEATEALREETEKLNINKD.

ANK repeat units lie at residues 49–78 (SDST…RANS) and 92–121 (TGNT…ADPF). Phosphoserine is present on Ser-78. A disordered region spans residues 152–173 (VEPEDDEEDTQTEGKNSVQITK). Acidic residues predominate over residues 153-162 (EPEDDEEDTQ). Positions 164 to 173 (EGKNSVQITK) are enriched in polar residues.

Its function is as follows. Required for normal rate of cell proliferation. This is Ankyrin repeat-containing protein YAR1 (YAR1) from Saccharomyces cerevisiae (strain ATCC 204508 / S288c) (Baker's yeast).